A 71-amino-acid polypeptide reads, in one-letter code: Dermaseptin-PT9 (71 aa).

An N-terminal signal peptide occupies residues Met1–Cys22. Residues Glu23–Arg43 constitute a propeptide that is removed on maturation. Val68 is subject to Valine amide. Residues Gly69–Gln71 constitute a propeptide that is removed on maturation.

The protein belongs to the frog skin active peptide (FSAP) family. Dermaseptin subfamily. In terms of tissue distribution, expressed by the skin glands.

It is found in the secreted. The protein resides in the target cell membrane. Its function is as follows. Antimicrobial peptide with activity against fungi, Gram-positive and Gram-negative bacteria. Is active against S.aureus (MIC=16 uM), MRSA (MIC=32 uM), E.faecalis (MIC=16 uM), E.coli (MIC=8 uM), P.aeruginosa (MIC=16 uM), K.pneumoniae (MIC=8 uM), and C.albicans (MIC=64 uM). Also inhibits biofilm formation. Acts by disrupting cell membranes. Also exhibits anti-proliferative effect against various human cancer cells. Shows weak hemolytic activity towards horse erythrocytes. The chain is Dermaseptin-PT9 from Phyllomedusa tarsius (Brownbelly leaf frog).